Here is an 82-residue protein sequence, read N- to C-terminus: Putative membrane protein insertion efficiency factor (82 aa).

It belongs to the UPF0161 family.

It localises to the cell membrane. Could be involved in insertion of integral membrane proteins into the membrane. This chain is Putative membrane protein insertion efficiency factor, found in Streptococcus uberis (strain ATCC BAA-854 / 0140J).